The primary structure comprises 344 residues: 2,3,4,5-tetrahydropyridine-2,6-dicarboxylate N-succinyltransferase (344 aa).

Residue E205 participates in Mg(2+) binding. E221 serves as the catalytic Acyl-anhydride intermediate. Succinyl-CoA is bound by residues R223, G238, S241, A264, 279–280 (EA), 287–289 (GTK), K304, and 317–320 (RRNS).

The protein belongs to the type 2 tetrahydrodipicolinate N-succinyltransferase family. Homotrimer. Magnesium ions are not essential for catalysis. serves as cofactor.

It localises to the cytoplasm. It carries out the reaction (S)-2,3,4,5-tetrahydrodipicolinate + succinyl-CoA + H2O = (S)-2-succinylamino-6-oxoheptanedioate + CoA. It participates in amino-acid biosynthesis; L-lysine biosynthesis via DAP pathway; LL-2,6-diaminopimelate from (S)-tetrahydrodipicolinate (succinylase route): step 1/3. Weakly inhibited by D-2-aminopimelate. In terms of biological role, catalyzes the conversion of the cyclic tetrahydrodipicolinate (THDP) into the acyclic N-succinyl-L-2-amino-6-oxopimelate using succinyl-CoA. Displays succinyl transferase activity with L-2-aminopimelate and succinyl-CoA as substrates. The protein is 2,3,4,5-tetrahydropyridine-2,6-dicarboxylate N-succinyltransferase of Pseudomonas aeruginosa (strain ATCC 15692 / DSM 22644 / CIP 104116 / JCM 14847 / LMG 12228 / 1C / PRS 101 / PAO1).